Consider the following 446-residue polypeptide: Probable D-serine dehydratase (446 aa).

Position 113 is an N6-(pyridoxal phosphate)lysine (K113).

Belongs to the serine/threonine dehydratase family. DsdA subfamily. It depends on pyridoxal 5'-phosphate as a cofactor.

It catalyses the reaction D-serine = pyruvate + NH4(+). This Burkholderia lata (strain ATCC 17760 / DSM 23089 / LMG 22485 / NCIMB 9086 / R18194 / 383) protein is Probable D-serine dehydratase.